Reading from the N-terminus, the 160-residue chain is Single-stranded DNA-binding protein 2 (160 aa).

The SSB domain occupies 2 to 104; it reads MNRVVLVGRL…VVAESVQFLE (103 aa). The interval 107–160 is disordered; that stretch reads NNNVEGATSNNYQNKANYSNNNQTSSYRADTSQKSDSFASEGKPIDINEDDLPF. The span at 115–129 shows a compositional bias: low complexity; sequence SNNYQNKANYSNNNQ. Residues 130–144 are compositionally biased toward polar residues; it reads TSSYRADTSQKSDSF. An Important for interaction with partner proteins motif is present at residues 155 to 160; it reads EDDLPF.

In terms of assembly, homotetramer.

Its function is as follows. Plays an important role in DNA replication, recombination and repair. Binds to ssDNA and to an array of partner proteins to recruit them to their sites of action during DNA metabolism. This Listeria monocytogenes serovar 1/2a (strain ATCC BAA-679 / EGD-e) protein is Single-stranded DNA-binding protein 2 (ssb2).